Consider the following 152-residue polypeptide: MKLIASNKKAYFDYEILETLEAGLALLGSEVKALRQTRVNLKDNFVKIIKGEAFLFGVHISYLDTIHAYYKPNERRERKLLLHKKQLLKWQMEASKERLSIVGLKLYFNQKNRAKIQIALVKGKRLHDKRQSLKEKALNKEILADLKHHFKG.

It belongs to the SmpB family.

The protein localises to the cytoplasm. Required for rescue of stalled ribosomes mediated by trans-translation. Binds to transfer-messenger RNA (tmRNA), required for stable association of tmRNA with ribosomes. tmRNA and SmpB together mimic tRNA shape, replacing the anticodon stem-loop with SmpB. tmRNA is encoded by the ssrA gene; the 2 termini fold to resemble tRNA(Ala) and it encodes a 'tag peptide', a short internal open reading frame. During trans-translation Ala-aminoacylated tmRNA acts like a tRNA, entering the A-site of stalled ribosomes, displacing the stalled mRNA. The ribosome then switches to translate the ORF on the tmRNA; the nascent peptide is terminated with the 'tag peptide' encoded by the tmRNA and targeted for degradation. The ribosome is freed to recommence translation, which seems to be the essential function of trans-translation. The sequence is that of SsrA-binding protein from Helicobacter pylori (strain J99 / ATCC 700824) (Campylobacter pylori J99).